A 65-amino-acid chain; its full sequence is Sulfur carrier protein TtuB (65 aa).

1-thioglycine; alternate is present on Gly-65. At Gly-65 the chain carries Glycyl adenylate; alternate. Gly-65 participates in a covalent cross-link: Glycyl cysteine thioester (Gly-Cys) (interchain with C-192 in TtuC); alternate. Gly-65 is covalently cross-linked (Glycyl lysine isopeptide (Gly-Lys) (interchain with K-? in acceptor proteins); alternate).

This sequence belongs to the TtuB family. As to quaternary structure, is able to form a heterocomplex with TtuA. The C-terminal glycine residue of TtuB is first activated by TtuC as an acyl-adenylate (TtuB-COAMP), and then converted to the thiocarboxylate form (TtuB-COSH) by the cysteine desulfurases IscS or SufS.

It functions in the pathway tRNA modification. Required for the 2-thiolation of 5-methyluridine residue at position 54 in the T loop of tRNAs, leading to 5-methyl-2-thiouridine (m(5)s(2)U or s(2)T). This modification allows thermal stabilization of tRNAs in thermophilic microorganisms, and is essential for cell growth at high temperatures. Thiocarboxylated TtuB functions as the sulfur donor in the sulfurtransferase reaction catalyzed by TtuA. TtuB also functions as a protein modifier covalently attached to lysine residues of the target proteins TtuA and TtuC. TtuB conjugation might play a regulatory role to ensure appropriate sulfur transfer in cells. This chain is Sulfur carrier protein TtuB, found in Thermus thermophilus (strain ATCC BAA-163 / DSM 7039 / HB27).